A 58-amino-acid polypeptide reads, in one-letter code: Protein SinI (58 aa).

A Sin domain is found at asparagine 2–lysine 40.

In terms of assembly, heterodimer with SinR.

In terms of biological role, acts as an antagonist to SinR. SinI prevents SinR from binding to its target sequence on the gene for AprE. The protein is Protein SinI (sinI) of Bacillus licheniformis.